The primary structure comprises 235 residues: RNA pyrophosphohydrolase (235 aa).

The region spanning 6 to 149 (GFRPNVGIIL…KRGVYEMALT (144 aa)) is the Nudix hydrolase domain. The short motif at 38-59 (GGIDRGENPEQAMFRELHEEVG) is the Nudix box element. Residues 184 to 235 (ANQSGEPGSFPAAGGIPSYATRPGAPFELPPGATFEPDPQTSFGVNAPTKKT) form a disordered region.

The protein belongs to the Nudix hydrolase family. RppH subfamily. A divalent metal cation serves as cofactor.

Accelerates the degradation of transcripts by removing pyrophosphate from the 5'-end of triphosphorylated RNA, leading to a more labile monophosphorylated state that can stimulate subsequent ribonuclease cleavage. In Polaromonas naphthalenivorans (strain CJ2), this protein is RNA pyrophosphohydrolase.